Here is a 484-residue protein sequence, read N- to C-terminus: uncharacterized protein (484 aa).

12 helical membrane passes run 19–39 (LSFG…MIFV), 78–98 (VNWG…WLIV), 110–130 (LFFM…GFII), 134–154 (IFAI…SNYL), 165–185 (FSPF…AGII), 199–219 (IVFL…IILG), 249–269 (TWYW…PFTF), 289–309 (ISVF…TIGL), 321–341 (ISTI…VFVL), 360–380 (LFLF…GVML), 398–418 (FGLI…ITSL), and 440–460 (LGAY…LALL).

It is found in the cell membrane. This is an uncharacterized protein from Mesomycoplasma hyopneumoniae (strain J / ATCC 25934 / NCTC 10110) (Mycoplasma hyopneumoniae).